Reading from the N-terminus, the 322-residue chain is Triosephosphate isomerase, chloroplastic (322 aa).

The N-terminal 67 residues, 1–67 (MAVVSTSLAS…RRCPRGVVAM (67 aa)), are a transit peptide targeting the chloroplast. Residues Asn78 and Lys80 each coordinate substrate. His162 acts as the Electrophile in catalysis. The Proton acceptor role is filled by Glu232.

Belongs to the triosephosphate isomerase family. As to quaternary structure, homodimer.

The protein resides in the plastid. Its subcellular location is the chloroplast. The catalysed reaction is D-glyceraldehyde 3-phosphate = dihydroxyacetone phosphate. Its pathway is carbohydrate biosynthesis; Calvin cycle. The protein is Triosephosphate isomerase, chloroplastic (TPIP1) of Spinacia oleracea (Spinach).